Reading from the N-terminus, the 277-residue chain is Probable endonuclease 4 (277 aa).

His70, His108, Glu143, Asp176, His179, His210, Asp223, His225, and Glu255 together coordinate Zn(2+).

This sequence belongs to the AP endonuclease 2 family. Requires Zn(2+) as cofactor.

The enzyme catalyses Endonucleolytic cleavage to 5'-phosphooligonucleotide end-products.. Functionally, endonuclease IV plays a role in DNA repair. It cleaves phosphodiester bonds at apurinic or apyrimidinic (AP) sites, generating a 3'-hydroxyl group and a 5'-terminal sugar phosphate. In Mycoplasmopsis synoviae (strain 53) (Mycoplasma synoviae), this protein is Probable endonuclease 4.